The following is a 92-amino-acid chain: WAP four-disulfide core domain protein 12 (92 aa).

Residues 1–23 (MGSSRFLVLMVSLALVTLVAAEG) form the signal peptide. In terms of domain architecture, WAP spans 27–74 (NIEKPEVCPADNVRCIKSDPPQCHTDQDCQGIRKCCYLHCGFKCVIPV). Intrachain disulfides connect C34–C62, C41–C66, C49–C61, and C55–C70.

The protein resides in the secreted. Its function is as follows. Antibacterial protein. Putative acid-stable proteinase inhibitor. In Aotus nancymaae (Ma's night monkey), this protein is WAP four-disulfide core domain protein 12 (WFDC12).